Reading from the N-terminus, the 1169-residue chain is Integrin alpha-X (1169 aa).

Positions 1–19 (MSCTWIAFLLLLGFVSCLG) are cleaved as a signal peptide. Residues 20–1116 (FNLDAEKLTH…EMYKVHNPVP (1097 aa)) lie on the Extracellular side of the membrane. FG-GAP repeat units lie at residues 23–78 (DAEK…NCEP) and 79–138 (ISLQ…QSQN). Cys69 and Cys76 are oxidised to a cystine. Asn89 carries an N-linked (GlcNAc...) asparagine glycan. Intrachain disulfides connect Cys108-Cys126 and Cys116-Cys146. Residues 152 to 330 (DIVFLIDGSG…DALKDIENQL (179 aa)) enclose the VWFA domain. The Mg(2+) site is built by Asp158, Ser160, Ser162, and Asp260. A glycan (N-linked (GlcNAc...) asparagine) is linked at Asn267. FG-GAP repeat units follow at residues 341-392 (ETPS…PTFI), 393-444 (NMSQ…SRHW), 445-505 (RPKS…GSRW), 508-566 (GTTL…QDIA), and 571-631 (QRIS…FTPA). Asn393 carries N-linked (GlcNAc...) asparagine glycosylation. Residues Asp467, Asp469, Asp471, and Asp475 each coordinate Ca(2+). A disulfide bond links Cys496 and Cys507. Ca(2+)-binding residues include Asp531, Asn533, Asp535, Asp539, Asp594, Asp598, and Asp602. 2 disulfides stabilise this stretch: Cys640/Cys721 and Cys656/Cys711. A glycan (N-linked (GlcNAc...) asparagine) is linked at Asn734. 2 disulfide bridges follow: Cys770/Cys776 and Cys858/Cys873. The N-linked (GlcNAc...) asparagine glycan is linked to Asn949. Disulfide bonds link Cys1007-Cys1031 and Cys1036-Cys1041. N-linked (GlcNAc...) asparagine glycosylation is found at Asn1059 and Asn1084. Residues 1117-1137 (LIVGSSVGGLLLLAIITAILY) traverse the membrane as a helical segment. Residues 1138–1169 (KAGFFKRQYKEMLEEANGQFVSDGTPTPQVAQ) are Cytoplasmic-facing. A GFFKR motif motif is present at residues 1140-1144 (GFFKR).

The protein belongs to the integrin alpha chain family. In terms of assembly, heterodimer of an alpha and a beta subunit. Alpha-X associates with beta-2.

It is found in the membrane. Its function is as follows. Integrin alpha-X/beta-2 is a receptor for fibrinogen. It recognizes the sequence G-P-R in fibrinogen. It mediates cell-cell interaction during inflammatory responses. It is especially important in monocyte adhesion and chemotaxis. In Mus musculus (Mouse), this protein is Integrin alpha-X (Itgax).